Reading from the N-terminus, the 189-residue chain is Photosystem I assembly protein Ycf4 (189 aa).

2 helical membrane-spanning segments follow: residues 29–49 (WATI…SSYL) and 69–89 (LVMG…WLVI).

It belongs to the Ycf4 family.

The protein resides in the cellular thylakoid membrane. Functionally, seems to be required for the assembly of the photosystem I complex. The polypeptide is Photosystem I assembly protein Ycf4 (Nostoc punctiforme (strain ATCC 29133 / PCC 73102)).